Reading from the N-terminus, the 344-residue chain is Phenylalanine--tRNA ligase alpha subunit (344 aa).

Glu256 is a binding site for Mg(2+).

It belongs to the class-II aminoacyl-tRNA synthetase family. Phe-tRNA synthetase alpha subunit type 1 subfamily. As to quaternary structure, tetramer of two alpha and two beta subunits. The cofactor is Mg(2+).

The protein localises to the cytoplasm. The enzyme catalyses tRNA(Phe) + L-phenylalanine + ATP = L-phenylalanyl-tRNA(Phe) + AMP + diphosphate + H(+). This chain is Phenylalanine--tRNA ligase alpha subunit, found in Bacillus anthracis (strain CDC 684 / NRRL 3495).